We begin with the raw amino-acid sequence, 576 residues long: MGSAQDQTKKRKRQKVSDGSKSSKSRVVEADDQRELTETTTKPKKQKTEDPPTDETPDAEDVEQTENGETAQDDAAKDAEAPLPSTMGLSLPTDAAPQKFDELNLSEPTMKAIRQMGFETMTEIQQRTIPPTLAGRDILGAAKTGSGKTLAFLIPAVEMLSALRFKPRNGTGVIIITPTRELALQIFGVAKELCEFHSQTYGIVIGGANRRAEAEKLNKGVNLLIATPGRLLDHLQNTQGFVYKNCKVLVLDEADRCLDVGFEAELRQIVKILPSEERQTLLFSATQTTKVEDLARISLKPGPLYINVDHRKEHATVDGVDQGYIICEADKRFLLLFTFLKKNLKKKIIIFFSSCNAVKYYADLLNYIDLPVLALHGKLKQQTRTQRFFEFCNATQGTLICTDVAARGLDIPAVDYIIQFDPPDEPKAYIHRVGRTARGTKGKIGRSIMLLQPSEVGFLNVLREARVPVVEFEFPQKKIIDIQSQLEKLIGQNYYLNQIQSAKDGYRAYLHAYASHSLRSVFNINKLDLVKVAKSFGFTTPPRVDITLGASMSKDKVQARRPYGSQNKSARFKRRA.

Residues 1-94 (MGSAQDQTKK…STMGLSLPTD (94 aa)) form a disordered region. Positions 26–37 (RVVEADDQRELT) are enriched in basic and acidic residues. Positions 51–66 (PPTDETPDAEDVEQTE) are enriched in acidic residues. The short motif at 98-126 (QKFDELNLSEPTMKAIRQMGFETMTEIQQ) is the Q motif element. Positions 129 to 305 (IPPTLAGRDI…RISLKPGPLY (177 aa)) constitute a Helicase ATP-binding domain. ATP is bound at residue 142–149 (AKTGSGKT). A DEAD box motif is present at residues 252–255 (DEAD). Residues 319–490 (GVDQGYIICE…DIQSQLEKLI (172 aa)) enclose the Helicase C-terminal domain. Residues 555-576 (DKVQARRPYGSQNKSARFKRRA) are disordered.

This sequence belongs to the DEAD box helicase family. DDX18/HAS1 subfamily. Associates in the nucleolus with the 60S and pre-60S ribosomal subunits.

The protein resides in the nucleus. Its subcellular location is the nucleolus. The catalysed reaction is ATP + H2O = ADP + phosphate + H(+). Functionally, ATP-dependent RNA helicase involved in 40S ribosomal subunit biogenesis. Required for the processing and cleavage of 35S pre-rRNA at sites A0, A1, and A2, leading to mature 18S rRNA. The chain is ATP-dependent RNA helicase has1 (has1) from Aspergillus terreus (strain NIH 2624 / FGSC A1156).